The primary structure comprises 1480 residues: MRFSIEYIDWELSPCDPAYDFVGKDLPTANEELTTVPVIRVFGLNEEAETVCCFIHNVFPYIYVEYSSFAETLDLEVPDFLSQLQTSINYALALAARANPETYKPAVQSVQLVKGIPFYGYSFCFQKFLKICLFSPKNRDRLVDLFRQGAILNKVIQVYESHLPYLLQFMVDHNLYGCAPIDLDDSIIKRDDLLSFCNVEVHVSPNAILNACWLSERNIHTDLYETHASSPNSLLVTSLAEIWKSEASRRNLTSSDETNSFSKLHQSQFGLKEESSHEPRSSQHWKNEVAMKDLLKNLIKSKLESSSDVNTPLIFDPWPELPTIYSAIHTKDYVRPSQNDISVSQISVDEKICTSYESLPKIQLEQNTAPVIESSFEQLDSELERILGDTLFDSFPYVEPNVDRSKFPKSPLNSSQEVTIHSSQDRQSPPSSPLKDVPSQINPFSPSLRLKGGSPITKREIEFCRDLPNRPTSSEPNQGDTRKAGKRLKYSRNLDDYHICTQIPEDYSPKFLSQHESFVYKQQPPSTDDLYGTMKKLKIPFSIPTNVHYSSEKDIPSYSQEYLGKSHYPIGVSSRYLPEFQSDGSVSEKVRLNPLKLSNFHGERTWQYIKPAPLAVDLSNLESKEAVSEEIQSPQRLSRSKVFRKDPYSCVRILALELFCCSHGGLTPDPTKDSIECCFWAYQEDVNSSMIDRVGFIVVDKSASNSSFGRSFPSCTVLVVNSELELINEVIGLNRQLDPTIVCGYEVHNSSWGYLIERASYRFNYDLPEQLSRLKCTSKANFAKKENAWKYTTTSSINIVGRHVLNIWRILRGEVNLLNYSLENVVLNIFKKQTPYYNQADKVHLWQSSRFHEKQILLNYMLNRTRYCLEILSACAIVTKIREQARIIGIDFMSVISRGSQFKVESIMFRIAKPENYIFPSPSAKQVAEQNALEALPLVMEPKSDLYNNPVVVLDFQSLYPSIIIAYNLCYSTCLGPVKIVNGKVKLGFMFHSSNPNIVNLIKNDVYISPNGYAYVKENVRKSLLAKMLEELIETRNMVKRGMKDCDSDYVNKVLNSRQLALKLIANVTYGYTSASFSGRMPCSEIADTIVETGREILSYSLEYINTLDFCHAKVVYGDTDSLFVELPGATKEQAFDIGQQLANNITSRFPSPIRLKFEKIYFPCFLLAKKRYVGFKFESVSQKAPIFEAKGIETVRRDGTPVQQQLLRRCLEILFKTKDLSTVKKEFQNVCYQIMSGNVPVMDFCFSKEVRLEKYKELSTAPPGAVMARRLMTKDPRREPQYGERVPYLIIAAAPGTTLANRSVAPEEFLSSSFSQLDINYYINNSLIPPLDRFLNLLGASAQSWYHEMPKPRTSLKLTETVKGGIQKKTLDTFLMEKLCSSCLKNNIEIIPDKINSLCSDCLKNPCATISKAVTQHNAYNKKLSLLFDICRGCSKLSSSDPVLCKSNSCKVYYDRAKTENYAKVQAEMLTKTLGSLDW.

The interval 403-488 is disordered; that stretch reads DRSKFPKSPL…GDTRKAGKRL (86 aa). A compositionally biased stretch (polar residues) spans 411 to 427; it reads PLNSSQEVTIHSSQDRQ. The span at 457 to 468 shows a compositional bias: basic and acidic residues; that stretch reads TKREIEFCRDLP. Over residues 470–479 the composition is skewed to polar residues; it reads RPTSSEPNQG. Zn(2+) is bound by residues Cys1381, Cys1384, Cys1400, and Cys1403. A CysA-type zinc finger spans residues 1381–1403; sequence CSSCLKNNIEIIPDKINSLCSDC. [4Fe-4S] cluster is bound by residues Cys1432, Cys1435, Cys1446, and Cys1451. The CysB motif signature appears at 1432–1451; it reads CRGCSKLSSSDPVLCKSNSC.

Belongs to the DNA polymerase type-B family. Forms DNA polymerase zeta with rev7. It depends on [4Fe-4S] cluster as a cofactor.

It localises to the mitochondrion. The protein resides in the nucleus. It carries out the reaction DNA(n) + a 2'-deoxyribonucleoside 5'-triphosphate = DNA(n+1) + diphosphate. In terms of biological role, nonessential DNA polymerase. Required for DNA damage induced mutagenesis. Involved in DNA repair, mitochondrial DNA repair and translesion synthesis. Has a role in the bypass of abasic (AP) sites. The chain is DNA polymerase zeta catalytic subunit (rev3) from Schizosaccharomyces pombe (strain 972 / ATCC 24843) (Fission yeast).